Here is an 87-residue protein sequence, read N- to C-terminus: Small ribosomal subunit protein bS20 (87 aa).

A disordered region spans residues 1–22 (MAHHKSAIKRIKQNAKKNARNR).

This sequence belongs to the bacterial ribosomal protein bS20 family.

Binds directly to 16S ribosomal RNA. The protein is Small ribosomal subunit protein bS20 of Pelobacter propionicus (strain DSM 2379 / NBRC 103807 / OttBd1).